We begin with the raw amino-acid sequence, 424 residues long: Enolase (424 aa).

Glutamine 162 lines the (2R)-2-phosphoglycerate pocket. The active-site Proton donor is the glutamate 204. Residues aspartate 241, glutamate 284, and aspartate 311 each coordinate Mg(2+). 4 residues coordinate (2R)-2-phosphoglycerate: lysine 336, arginine 365, serine 366, and lysine 387. Lysine 336 functions as the Proton acceptor in the catalytic mechanism.

This sequence belongs to the enolase family. The cofactor is Mg(2+).

The protein localises to the cytoplasm. Its subcellular location is the secreted. It localises to the cell surface. The catalysed reaction is (2R)-2-phosphoglycerate = phosphoenolpyruvate + H2O. Its pathway is carbohydrate degradation; glycolysis; pyruvate from D-glyceraldehyde 3-phosphate: step 4/5. In terms of biological role, catalyzes the reversible conversion of 2-phosphoglycerate (2-PG) into phosphoenolpyruvate (PEP). It is essential for the degradation of carbohydrates via glycolysis. The sequence is that of Enolase from Maricaulis maris (strain MCS10) (Caulobacter maris).